Reading from the N-terminus, the 748-residue chain is Transcription factor FBD3 (748 aa).

Residues 1–10 (MPEQPRRPSD) are compositionally biased toward basic and acidic residues. A disordered region spans residues 1-26 (MPEQPRRPSDQEQNQSETGPPTNKRR). Residues 11–21 (QEQNQSETGPP) are compositionally biased toward polar residues. The segment at residues 32–59 (CNACRSRKSRCDGQRPSCSSCLSLGFDC) is a DNA-binding region (zn(2)-C6 fungal-type). Disordered regions lie at residues 116-160 (GTIN…EGIP) and 417-438 (IPDEQMMRREPSSGRSPATSGN). Residues 131 to 141 (APTKASAPSGA) are compositionally biased toward low complexity. Residues 429–438 (SGRSPATSGN) are compositionally biased toward polar residues.

The protein resides in the nucleus. In terms of biological role, transcription factor; part of the Fusarium detoxification of benzoxazolinone cluster 2 (FDB2) involved in the degradation of benzoxazolinones produced by the host plant. Maize, wheat, and rye produce the 2 benzoxazinone phytoanticipins 2,4-dihy-droxy-7-methoxy-1,4-benzoxazin-3-one (DIMBOA) and 2,4-dihydroxy-1,4-benzoxazin-3-one (DIBOA) that, due to their inherent instability once released, spontaneously degrade to the more stable corresponding benzoxazolinones, 6-methoxy-2-benzoxazolinone (MBOA) and 2-benzoxazolinone (BOA), respectively. FDB3 is not essentiel, but contributes to efficient BOA biotransformation. The polypeptide is Transcription factor FBD3 (Gibberella moniliformis (strain M3125 / FGSC 7600) (Maize ear and stalk rot fungus)).